A 222-amino-acid polypeptide reads, in one-letter code: Uracil-DNA glycosylase (222 aa).

The Proton acceptor role is filled by Asp66.

Belongs to the uracil-DNA glycosylase (UDG) superfamily. UNG family.

The protein localises to the cytoplasm. The enzyme catalyses Hydrolyzes single-stranded DNA or mismatched double-stranded DNA and polynucleotides, releasing free uracil.. In terms of biological role, excises uracil residues from the DNA which can arise as a result of misincorporation of dUMP residues by DNA polymerase or due to deamination of cytosine. This chain is Uracil-DNA glycosylase, found in Porphyromonas gingivalis (strain ATCC BAA-308 / W83).